The primary structure comprises 351 residues: Methylthioribose-1-phosphate isomerase (351 aa).

The active-site Proton donor is the Asp244.

The protein belongs to the eIF-2B alpha/beta/delta subunits family. MtnA subfamily.

The protein resides in the cytoplasm. It localises to the nucleus. The enzyme catalyses 5-(methylsulfanyl)-alpha-D-ribose 1-phosphate = 5-(methylsulfanyl)-D-ribulose 1-phosphate. It participates in amino-acid biosynthesis; L-methionine biosynthesis via salvage pathway; L-methionine from S-methyl-5-thio-alpha-D-ribose 1-phosphate: step 1/6. Catalyzes the interconversion of methylthioribose-1-phosphate (MTR-1-P) into methylthioribulose-1-phosphate (MTRu-1-P). The protein is Methylthioribose-1-phosphate isomerase of Anopheles gambiae (African malaria mosquito).